Consider the following 618-residue polypeptide: Sodium-coupled monocarboxylate transporter 2 (618 aa).

Residues 1-9 (MEVKNFAVW) are Extracellular-facing. A helical transmembrane segment spans residues 10–30 (DYVVFAALFFISSGIGVFFAI). The Cytoplasmic portion of the chain corresponds to 31–47 (KERKKATSREFLVGGRQ). The helical transmembrane segment at 48-68 (MSFGPVGLSLTASFMSAVTVL) threads the bilayer. Residues 69–82 (GTPSEVYRFGASFL) are Extracellular-facing. A helical transmembrane segment spans residues 83 to 103 (VFFIAYLFVILLTSELFLPVF). Over 104–128 (YRSGITSTYEYLQLRFNKPVRYAAT) the chain is Cytoplasmic. The helical transmembrane segment at 129–149 (VIYIVQTILYTGVVVYAPALA) threads the bilayer. The Extracellular portion of the chain corresponds to 150–157 (LNQVTGFD). The chain crosses the membrane as a helical span at residues 158-178 (LWGSVFATGIVCTFYCTLGGL). Residues 179 to 180 (KA) lie on the Cytoplasmic side of the membrane. Residues 181–201 (VVWTDAFQMVVMIVGFLTVLI) traverse the membrane as a helical segment. Over 202-235 (QGSTHAGGFHNVLEQSTNGSRLHIFDFDVDPLRR) the chain is Extracellular. The helical transmembrane segment at 236-256 (HTFWTITVGGTFTWLGIYGVN) threads the bilayer. Topologically, residues 257 to 275 (QSTIQRCISCKTEKHAKLA) are cytoplasmic. Residues 276–296 (LYFNLLGLWIILVCAVFSGLI) form a helical membrane-spanning segment. Residues 297-321 (MYSHFKDCDPWTSGIISAPDQLMPY) are Extracellular-facing. The helical transmembrane segment at 322 to 342 (FVMEIFATMPGLPGLFVACAF) threads the bilayer. The Cytoplasmic segment spans residues 343 to 385 (SGTLSTVASSINALATVTFEDFVKSCFPHLSDKLSTWISKGLC). The helical transmembrane segment at 386 to 406 (LLFGVMCTSMAVAASVMGGVV) threads the bilayer. Residues 407-411 (QASLS) are Extracellular-facing. The chain crosses the membrane as a helical span at residues 412–432 (IHGMCGGPMLGLFSLGIVFPF). The Cytoplasmic segment spans residues 433–437 (VNWKG). A helical membrane pass occupies residues 438-458 (ALGGLLTGITLSFWVAIGAFI). The Extracellular segment spans residues 459–504 (YPAPASKTWPLPLSTDQCIKSNVTATGPPVLSSRPGIADTWYSISY). Asn-480 carries an N-linked (GlcNAc...) asparagine glycan. A helical transmembrane segment spans residues 505–525 (LYYSAVGCLGCIVAGVIISLI). Residues 526–618 (TGRQRGEDIQ…NNMAFETTHF (93 aa)) lie on the Cytoplasmic side of the membrane.

This sequence belongs to the sodium:solute symporter (SSF) (TC 2.A.21) family.

The protein localises to the apical cell membrane. The enzyme catalyses (S)-lactate(out) + Na(+)(out) = (S)-lactate(in) + Na(+)(in). The catalysed reaction is nicotinate(out) + Na(+)(out) = nicotinate(in) + Na(+)(in). It catalyses the reaction pyruvate(out) + Na(+)(out) = pyruvate(in) + Na(+)(in). It carries out the reaction propanoate(out) + Na(+)(out) = propanoate(in) + Na(+)(in). The enzyme catalyses butanoate(out) + Na(+)(out) = butanoate(in) + Na(+)(in). The catalysed reaction is acetoacetate(out) + Na(+)(out) = acetoacetate(in) + Na(+)(in). With respect to regulation, cotransport of monocarboxylates and nicotinate strongly inhibited by ibuprofen, fenoprofen and ketoprofen. Functionally, acts as an electroneutral and low-affinity sodium (Na(+))-dependent sodium-coupled solute transporter. Catalyzes the transport across the plasma membrane of many monocarboxylates such as lactate, pyruvate, nicotinate, propionate, butyrate and beta-D-hydroxybutyrate. May be responsible for the first step of reabsorption of monocarboxylates from the lumen of the proximal tubule of the kidney and the small intestine. May play also a role in monocarboxylates transport in the retina. In Homo sapiens (Human), this protein is Sodium-coupled monocarboxylate transporter 2.